Here is a 131-residue protein sequence, read N- to C-terminus: Methylglyoxal synthase (131 aa).

The 131-residue stretch at Met1 to Lys131 folds into the MGS-like domain. Substrate is bound by residues His8, Lys12, Thr34–Thr37, and Ser54–Gly55. Catalysis depends on Asp60, which acts as the Proton donor/acceptor. His87 is a binding site for substrate.

It belongs to the methylglyoxal synthase family.

The catalysed reaction is dihydroxyacetone phosphate = methylglyoxal + phosphate. In terms of biological role, catalyzes the formation of methylglyoxal from dihydroxyacetone phosphate. The chain is Methylglyoxal synthase from Bacillus cereus (strain AH820).